The following is a 223-amino-acid chain: MHFLIPAAGSGSRMKAGKNKLLIDLEGESLIYWTLKSVFSASSTNWVGIIGQPKDKNLLLNSAKDFAHKVHWINGGDTRQQSVFNGLKALPKDAEKVLIHDGARCLINPELIDLCAKQLDENEAVILATKVTDTIKIVDNEGFIKETPDRNHLWAAQTPQGFLVDRLIKAHKMAIDKNWTVTDDASLFEILNWKVKIVEGAYSNIKITSPIDLKIAKLFVKDP.

This sequence belongs to the IspD/TarI cytidylyltransferase family. IspD subfamily.

The enzyme catalyses 2-C-methyl-D-erythritol 4-phosphate + CTP + H(+) = 4-CDP-2-C-methyl-D-erythritol + diphosphate. It participates in isoprenoid biosynthesis; isopentenyl diphosphate biosynthesis via DXP pathway; isopentenyl diphosphate from 1-deoxy-D-xylulose 5-phosphate: step 2/6. Functionally, catalyzes the formation of 4-diphosphocytidyl-2-C-methyl-D-erythritol from CTP and 2-C-methyl-D-erythritol 4-phosphate (MEP). The protein is 2-C-methyl-D-erythritol 4-phosphate cytidylyltransferase of Prochlorococcus marinus (strain MIT 9215).